Reading from the N-terminus, the 250-residue chain is Bacteriorhodopsin-I (250 aa).

A run of 7 helical transmembrane segments spans residues 7 to 27 (EGIWLWLGTAGMFLGMLYFIA), 42 to 62 (IATILITAIAFVNYLAMALGF), 81 to 101 (YTDWLFTTPLLLYDLGLLAGA), 114 to 134 (VLMIGTGVVATLSAGSGVLSA), 139 to 159 (LVWWGISTAFLLVLLYFLFSS), 185 to 205 (VWLVYPVWWLVGSEGLGLVGI), and 207 to 227 (IETAGFMVIDLVAKVGFGIIL). Residue Lys220 is modified to N6-(retinylidene)lysine.

This sequence belongs to the archaeal/bacterial/fungal opsin family. The covalent binding of retinal to the apoprotein, bacterioopsin, generates bacteriorhodopsin.

The protein localises to the membrane. Functionally, light-driven proton pump. In Haloarcula marismortui (strain ATCC 43049 / DSM 3752 / JCM 8966 / VKM B-1809) (Halobacterium marismortui), this protein is Bacteriorhodopsin-I (bop).